A 508-amino-acid polypeptide reads, in one-letter code: GATA zinc finger domain-containing protein 13 (508 aa).

2 disordered regions span residues 20-51 (YSKN…INNN) and 203-296 (MSII…PEIE). A compositionally biased stretch (low complexity) spans 23-51 (NNNNNNNNNNNNNINNNNNNNNNNNINNN). Residues 203–224 (MSIIPSDNFPTPQLPLETNTDL) are compositionally biased toward polar residues. The segment covering 225-247 (NNTSDCSSTTFSSPPSSAFNSPN) has biased composition (low complexity). Residues 248–266 (LQNDYTQPQNQKSQSSTIV) are compositionally biased toward polar residues. Positions 269-279 (NSSKSKSKNNK) are enriched in basic residues. The segment at 327 to 354 (CSICKIKCSIYWRRILINEVRTSVCNAC) adopts a GATA-type zinc-finger fold. Positions 356–433 (LRTMKKTKKE…NNNNNNNNNN (78 aa)) form a coiled coil. Over residues 399–482 (TTTTTTTTTS…NNNNNDNYND (84 aa)) the composition is skewed to low complexity. A disordered region spans residues 399 to 484 (TTTTTTTTTS…NNNDNYNDSI (86 aa)).

The sequence is that of GATA zinc finger domain-containing protein 13 (gtaM) from Dictyostelium discoideum (Social amoeba).